The following is a 239-amino-acid chain: Ribonuclease PH (239 aa).

Phosphate contacts are provided by residues R86 and G124–R126.

It belongs to the RNase PH family. As to quaternary structure, homohexameric ring arranged as a trimer of dimers.

The enzyme catalyses tRNA(n+1) + phosphate = tRNA(n) + a ribonucleoside 5'-diphosphate. Phosphorolytic 3'-5' exoribonuclease that plays an important role in tRNA 3'-end maturation. Removes nucleotide residues following the 3'-CCA terminus of tRNAs; can also add nucleotides to the ends of RNA molecules by using nucleoside diphosphates as substrates, but this may not be physiologically important. Probably plays a role in initiation of 16S rRNA degradation (leading to ribosome degradation) during starvation. In Aromatoleum aromaticum (strain DSM 19018 / LMG 30748 / EbN1) (Azoarcus sp. (strain EbN1)), this protein is Ribonuclease PH.